Here is a 142-residue protein sequence, read N- to C-terminus: RNA-directed DNA polymerase homolog (142 aa).

It is found in the mitochondrion. The enzyme catalyses RNA(n) + a ribonucleoside 5'-triphosphate = RNA(n+1) + diphosphate. The chain is RNA-directed DNA polymerase homolog from Oenothera berteroana (Bertero's evening primrose).